The primary structure comprises 134 residues: Profilin-2 (134 aa).

An intrachain disulfide couples Cys13 to Cys118. Positions 84-100 (AVIRGKKGSGGITIKKT) match the Involved in PIP2 interaction motif. Thr114 carries the phosphothreonine modification.

The protein belongs to the profilin family. In terms of assembly, occurs in many kinds of cells as a complex with monomeric actin in a 1:1 ratio. In terms of processing, phosphorylated by MAP kinases.

It is found in the cytoplasm. Its subcellular location is the cytoskeleton. Functionally, binds to actin and affects the structure of the cytoskeleton. At high concentrations, profilin prevents the polymerization of actin, whereas it enhances it at low concentrations. This Olea europaea (Common olive) protein is Profilin-2.